A 971-amino-acid polypeptide reads, in one-letter code: MASNNVAQFAAELKMPAGVLLEQLQAAGVQKASEDDALSETDKARLLDHLRKSHGATDGDKRKITLTRKHTSEIKQSDATGKARTIQVEVRKKRTFVKRDDVAEGADQGQAQVAEADDDAELKRREEEARREAELLEKQAQELRERQERLEREEAERRAREEAAEAERRRAEEEAATKRAAAEVAAAQQQAAAQQAAAEQEATPTQSAQDEARAAAERAAQREAAKKAEDAAREAADKARAEQEEISKRRAAAEAEARAIREMMNTPRKAVVKAVEPPKPVEPPKPAEAKGTLHKPAKPEGAQARPAVKKPAGAAAPATTQAPAGAGDRNKKPGAGKGGWQDDAAKRRGIKTRGDSSGGVDRGWRGGPKGRGRHQDSSTFQAPTEPIVREVHVPETVSVADLAHKMSIKASEVIKVMMKMGQMVTINQVLDQETAMIIVEELGHRAVAAKLDDPEALLVEGESGTDAEQLPRPPVVTVMGHVDHGKTSLLDHIRRAKVAAGEAGGITQHIGAYHVDTPRGVITFLDTPGHEAFTAMRARGAKATDIVVLVVAADDGVMPQTKEAIAHAKAGGVPIVVAINKIDKPEANPDRVKQELVAEGVVPEEYGGDSPFVPVSAKTGAGIDDLLENVLLQAEVLELKAPVEAPAKGIVIEAKLDKGKGPVATILVQSGTLNRGDIVLAGTAYGRVRAMLDENGKPTKEAGPSIPVEIQGLSEVPGAGEEVIVLPDERKAREIALFRQGKFRDVKLAKQQAAKLESMLEQMGEGEVQNLPLIIKADVQGSQEALVQSLLKLSTDEVRVQIVHSAVGGISENDVNLATASKAVIIGFNTRADAQARKLAEANGIDIRYYNIIYDAVDEVKAAMSGMLAPEKREVITGMVEVRQVFKVPKIGTVAGCMVTDGIVKRSSSVRVLRNNVVIFTGELESLKRFKDDVKEVKQGFECGMSVKNFNDVTEGDQFEVFEVTEVARTL.

The segment covering 48–63 has biased composition (basic and acidic residues); it reads DHLRKSHGATDGDKRK. 2 disordered regions span residues 48–86 and 100–381; these read DHLR…ARTI and DDVA…STFQ. A compositionally biased stretch (low complexity) spans 105-114; it reads GADQGQAQVA. Basic and acidic residues predominate over residues 121 to 181; it reads ELKRREEEAR…EEEAATKRAA (61 aa). The segment covering 182 to 202 has biased composition (low complexity); that stretch reads AEVAAAQQQAAAQQAAAEQEA. Residues 210–261 show a composition bias toward basic and acidic residues; it reads DEARAAAERAAQREAAKKAEDAAREAADKARAEQEEISKRRAAAEAEARAIR. A compositionally biased stretch (pro residues) spans 277 to 286; that stretch reads PPKPVEPPKP. Residues 304–326 are compositionally biased toward low complexity; it reads ARPAVKKPAGAAAPATTQAPAGA. Residues 356–369 are compositionally biased toward gly residues; that stretch reads SSGGVDRGWRGGPK. Residues 471 to 640 enclose the tr-type G domain; that stretch reads PRPPVVTVMG…LLQAEVLELK (170 aa). The segment at 480-487 is G1; the sequence is GHVDHGKT. Position 480–487 (480–487) interacts with GTP; it reads GHVDHGKT. Residues 505 to 509 are G2; that stretch reads GITQH. Positions 526-529 are G3; that stretch reads DTPG. Residues 526 to 530 and 580 to 583 each bind GTP; these read DTPGH and NKID. Residues 580-583 form a G4 region; it reads NKID. A G5 region spans residues 616-618; sequence SAK.

Belongs to the TRAFAC class translation factor GTPase superfamily. Classic translation factor GTPase family. IF-2 subfamily.

It is found in the cytoplasm. Functionally, one of the essential components for the initiation of protein synthesis. Protects formylmethionyl-tRNA from spontaneous hydrolysis and promotes its binding to the 30S ribosomal subunits. Also involved in the hydrolysis of GTP during the formation of the 70S ribosomal complex. In Burkholderia orbicola (strain AU 1054), this protein is Translation initiation factor IF-2.